Consider the following 329-residue polypeptide: Glycerol-3-phosphate dehydrogenase [NAD(P)+] (329 aa).

Residues Ser13, Trp14, His34, and Lys105 each coordinate NADPH. Sn-glycerol 3-phosphate-binding residues include Lys105, Gly134, and Ser136. Position 138 (Ala138) interacts with NADPH. Lys189, Asp242, Ser252, Arg253, and Asn254 together coordinate sn-glycerol 3-phosphate. The active-site Proton acceptor is Lys189. Residue Arg253 participates in NADPH binding. 2 residues coordinate NADPH: Val277 and Glu279.

The protein belongs to the NAD-dependent glycerol-3-phosphate dehydrogenase family.

It is found in the cytoplasm. It catalyses the reaction sn-glycerol 3-phosphate + NAD(+) = dihydroxyacetone phosphate + NADH + H(+). It carries out the reaction sn-glycerol 3-phosphate + NADP(+) = dihydroxyacetone phosphate + NADPH + H(+). The protein operates within membrane lipid metabolism; glycerophospholipid metabolism. Functionally, catalyzes the reduction of the glycolytic intermediate dihydroxyacetone phosphate (DHAP) to sn-glycerol 3-phosphate (G3P), the key precursor for phospholipid synthesis. The protein is Glycerol-3-phosphate dehydrogenase [NAD(P)+] of Legionella pneumophila (strain Paris).